The chain runs to 170 residues: Cyclic pyranopterin monophosphate synthase (170 aa).

Substrate contacts are provided by residues 75–77 and 115–116; these read MCH and ME. The active site involves Asp-130.

It belongs to the MoaC family. Homohexamer; trimer of dimers.

The catalysed reaction is (8S)-3',8-cyclo-7,8-dihydroguanosine 5'-triphosphate = cyclic pyranopterin phosphate + diphosphate. It functions in the pathway cofactor biosynthesis; molybdopterin biosynthesis. Catalyzes the conversion of (8S)-3',8-cyclo-7,8-dihydroguanosine 5'-triphosphate to cyclic pyranopterin monophosphate (cPMP). This chain is Cyclic pyranopterin monophosphate synthase, found in Bacillus subtilis (strain 168).